A 327-amino-acid chain; its full sequence is Ribosomal RNA small subunit methyltransferase H (327 aa).

S-adenosyl-L-methionine contacts are provided by residues 36 to 38 (GGH), D61, F88, D114, and Q121.

This sequence belongs to the methyltransferase superfamily. RsmH family.

The protein resides in the cytoplasm. It catalyses the reaction cytidine(1402) in 16S rRNA + S-adenosyl-L-methionine = N(4)-methylcytidine(1402) in 16S rRNA + S-adenosyl-L-homocysteine + H(+). Specifically methylates the N4 position of cytidine in position 1402 (C1402) of 16S rRNA. The chain is Ribosomal RNA small subunit methyltransferase H from Chlorobium phaeovibrioides (strain DSM 265 / 1930) (Prosthecochloris vibrioformis (strain DSM 265)).